Consider the following 97-residue polypeptide: Co-chaperonin GroES (97 aa).

The protein belongs to the GroES chaperonin family. As to quaternary structure, heptamer of 7 subunits arranged in a ring. Interacts with the chaperonin GroEL.

It is found in the cytoplasm. Its function is as follows. Together with the chaperonin GroEL, plays an essential role in assisting protein folding. The GroEL-GroES system forms a nano-cage that allows encapsulation of the non-native substrate proteins and provides a physical environment optimized to promote and accelerate protein folding. GroES binds to the apical surface of the GroEL ring, thereby capping the opening of the GroEL channel. The protein is Co-chaperonin GroES of Pseudarthrobacter chlorophenolicus (strain ATCC 700700 / DSM 12829 / CIP 107037 / JCM 12360 / KCTC 9906 / NCIMB 13794 / A6) (Arthrobacter chlorophenolicus).